A 598-amino-acid polypeptide reads, in one-letter code: Aspartate--tRNA(Asp/Asn) ligase (598 aa).

Glu177 serves as a coordination point for L-aspartate. Residues 201 to 204 (QIFK) are aspartate. Arg223 and His451 together coordinate L-aspartate. 223 to 225 (RDE) contributes to the ATP binding site. Glu485 provides a ligand contact to ATP. Arg492 contacts L-aspartate. 537–540 (GVDR) serves as a coordination point for ATP.

This sequence belongs to the class-II aminoacyl-tRNA synthetase family. Type 1 subfamily. In terms of assembly, homodimer.

It localises to the cytoplasm. The enzyme catalyses tRNA(Asx) + L-aspartate + ATP = L-aspartyl-tRNA(Asx) + AMP + diphosphate. Its function is as follows. Aspartyl-tRNA synthetase with relaxed tRNA specificity since it is able to aspartylate not only its cognate tRNA(Asp) but also tRNA(Asn). Reaction proceeds in two steps: L-aspartate is first activated by ATP to form Asp-AMP and then transferred to the acceptor end of tRNA(Asp/Asn). In Anaplasma phagocytophilum (strain HZ), this protein is Aspartate--tRNA(Asp/Asn) ligase.